A 170-amino-acid chain; its full sequence is Adenine phosphoribosyltransferase (170 aa).

This sequence belongs to the purine/pyrimidine phosphoribosyltransferase family. As to quaternary structure, homodimer.

The protein resides in the cytoplasm. The enzyme catalyses AMP + diphosphate = 5-phospho-alpha-D-ribose 1-diphosphate + adenine. The protein operates within purine metabolism; AMP biosynthesis via salvage pathway; AMP from adenine: step 1/1. Functionally, catalyzes a salvage reaction resulting in the formation of AMP, that is energically less costly than de novo synthesis. The sequence is that of Adenine phosphoribosyltransferase from Nitrosopumilus maritimus (strain SCM1).